A 143-amino-acid chain; its full sequence is Large ribosomal subunit protein uL13 (143 aa).

Belongs to the universal ribosomal protein uL13 family. In terms of assembly, part of the 50S ribosomal subunit.

In terms of biological role, this protein is one of the early assembly proteins of the 50S ribosomal subunit, although it is not seen to bind rRNA by itself. It is important during the early stages of 50S assembly. This Alkaliphilus oremlandii (strain OhILAs) (Clostridium oremlandii (strain OhILAs)) protein is Large ribosomal subunit protein uL13.